Here is a 551-residue protein sequence, read N- to C-terminus: Hydroxymethylpyrimidine/phosphomethylpyrimidine kinase THI20 (551 aa).

Gln64 provides a ligand contact to 4-amino-5-hydroxymethyl-2-methylpyrimidine. Cys468 serves as the catalytic Nucleophile. The active-site Proton donor is the Glu540.

The protein in the N-terminal section; belongs to the ThiD family. This sequence in the C-terminal section; belongs to the thiaminase-2 family.

The catalysed reaction is 4-amino-5-hydroxymethyl-2-methylpyrimidine + ATP = 4-amino-2-methyl-5-(phosphooxymethyl)pyrimidine + ADP + H(+). The enzyme catalyses 4-amino-2-methyl-5-(phosphooxymethyl)pyrimidine + ATP = 4-amino-2-methyl-5-(diphosphooxymethyl)pyrimidine + ADP. It catalyses the reaction thiamine + H2O = 5-(2-hydroxyethyl)-4-methylthiazole + 4-amino-5-hydroxymethyl-2-methylpyrimidine + H(+). Its pathway is cofactor biosynthesis; thiamine diphosphate biosynthesis; 4-amino-2-methyl-5-diphosphomethylpyrimidine from 5-amino-1-(5-phospho-D-ribosyl)imidazole: step 2/3. It functions in the pathway cofactor biosynthesis; thiamine diphosphate biosynthesis; 4-amino-2-methyl-5-diphosphomethylpyrimidine from 5-amino-1-(5-phospho-D-ribosyl)imidazole: step 3/3. Its function is as follows. Trifunctional protein with both thiamine biosynthetic and degradative activity. Within the thiamine biosynthesis pathway, catalyzes the phosphorylation of hydroxymethylpyrimidine (HMP) to hydroxymethylpyrimidine phosphate (HMP-P), as well as of HMP-P to HMP-PP. Also has thiaminase II activity and degrades thiamine using water as the nucleophile, resulting only in the formation of HMP (4-amino-2-methyl-5-hydroxymethylpyrimidine) and Thz (4-methyl-5-thiazole ethanol). The polypeptide is Hydroxymethylpyrimidine/phosphomethylpyrimidine kinase THI20 (Saccharomyces cerevisiae (strain ATCC 204508 / S288c) (Baker's yeast)).